The primary structure comprises 677 residues: mRNA export factor Gle1 (677 aa).

Residues 34 to 48 are compositionally biased toward basic and acidic residues; sequence EDREPIWVEGSRKTP. 3 disordered regions span residues 34-65, 113-136, and 294-366; these read EDRE…NNEI, KQDA…DQLQ, and ERQR…ATST. A compositionally biased stretch (pro residues) spans 49–60; that stretch reads EPPLPEESPAPE. Coiled-coil stretches lie at residues 122-179 and 280-346; these read ETQQ…QKLH and QQQL…AANV. Basic and acidic residues predominate over residues 294-340; the sequence is ERQRQQQQEEERQKLEEQQKLEEQEKLRKEKEESAAKEKQQEAETAK.

Belongs to the GLE1 family. May associate with the NPC.

The protein resides in the cytoplasm. It is found in the nucleus. It localises to the nuclear pore complex. Its function is as follows. Required for the export of mRNAs containing poly(A) tails from the nucleus into the cytoplasm. May be involved in the terminal step of the mRNA transport through the nuclear pore complex (NPC). This chain is mRNA export factor Gle1, found in Drosophila melanogaster (Fruit fly).